A 435-amino-acid chain; its full sequence is Casein kinase I homolog 2 (435 aa).

The Protein kinase domain occupies 12–282 (YRVGRKIGEG…FLQELFDDVL (271 aa)). ATP-binding positions include 18–26 (IGEGSFGVI) and lysine 41. The Proton acceptor role is filled by aspartate 131. Position 361 is a phosphoserine (serine 361).

Belongs to the protein kinase superfamily. CK1 Ser/Thr protein kinase family. Casein kinase I subfamily.

The protein resides in the cytoplasm. It catalyses the reaction L-seryl-[protein] + ATP = O-phospho-L-seryl-[protein] + ADP + H(+). The catalysed reaction is L-threonyl-[protein] + ATP = O-phospho-L-threonyl-[protein] + ADP + H(+). In terms of biological role, casein kinases are operationally defined by their preferential utilization of acidic proteins such as caseins as substrates. May contribute to the regulation of morphology. The sequence is that of Casein kinase I homolog 2 (cki2) from Schizosaccharomyces pombe (strain 972 / ATCC 24843) (Fission yeast).